A 105-amino-acid chain; its full sequence is Large ribosomal subunit protein uL24 (105 aa).

The protein belongs to the universal ribosomal protein uL24 family. In terms of assembly, part of the 50S ribosomal subunit.

Functionally, one of two assembly initiator proteins, it binds directly to the 5'-end of the 23S rRNA, where it nucleates assembly of the 50S subunit. In terms of biological role, one of the proteins that surrounds the polypeptide exit tunnel on the outside of the subunit. This is Large ribosomal subunit protein uL24 from Mycobacterium avium (strain 104).